The chain runs to 465 residues: Probable tRNA modification GTPase MnmE (465 aa).

(6S)-5-formyl-5,6,7,8-tetrahydrofolate contacts are provided by Arg-23, Glu-85, and Arg-124. A TrmE-type G domain is found at 221-384 (GTKVCIIGKP…LNNCILDLSS (164 aa)). Residues 231-236 (NVGKSS), 250-256 (TNFPGTT), and 275-278 (DTAG) each bind GTP. Residues Ser-235 and Thr-256 each coordinate Mg(2+). Residue Lys-465 participates in (6S)-5-formyl-5,6,7,8-tetrahydrofolate binding.

It belongs to the TRAFAC class TrmE-Era-EngA-EngB-Septin-like GTPase superfamily. TrmE GTPase family. K(+) is required as a cofactor.

It is found in the plastid. The protein localises to the chloroplast. Exhibits a very high intrinsic GTPase hydrolysis rate. Involved in the addition of a carboxymethylaminomethyl (cmnm) group at the wobble position (U34) of certain tRNAs, forming tRNA-cmnm(5)s(2)U34. This chain is Probable tRNA modification GTPase MnmE, found in Cyanidium caldarium (Red alga).